Consider the following 347-residue polypeptide: GMP reductase (347 aa).

Position 108–131 (108–131 (ADFEKTKQILDLNPALNFVCIDVA)) interacts with NADP(+). K(+) contacts are provided by G181 and G183. Catalysis depends on C186, which acts as the Thioimidate intermediate. Residue 216-239 (IVSDGGCTTPGDVAKAFGGGADFV) coordinates NADP(+).

It belongs to the IMPDH/GMPR family. GuaC type 1 subfamily. In terms of assembly, homotetramer.

It catalyses the reaction IMP + NH4(+) + NADP(+) = GMP + NADPH + 2 H(+). Its function is as follows. Catalyzes the irreversible NADPH-dependent deamination of GMP to IMP. It functions in the conversion of nucleobase, nucleoside and nucleotide derivatives of G to A nucleotides, and in maintaining the intracellular balance of A and G nucleotides. In Escherichia coli O127:H6 (strain E2348/69 / EPEC), this protein is GMP reductase.